Here is a 388-residue protein sequence, read N- to C-terminus: Succinate--CoA ligase [ADP-forming] subunit beta (388 aa).

The ATP-grasp domain occupies Lys-9–Glu-244. ATP-binding positions include Lys-46, Gly-53–Gly-55, Glu-99, Val-102, and Glu-107. Asn-199 and Asp-213 together coordinate Mg(2+). Residues Asn-264 and Gly-321–Leu-323 each bind substrate.

Belongs to the succinate/malate CoA ligase beta subunit family. As to quaternary structure, heterotetramer of two alpha and two beta subunits. Mg(2+) is required as a cofactor.

It carries out the reaction succinate + ATP + CoA = succinyl-CoA + ADP + phosphate. The enzyme catalyses GTP + succinate + CoA = succinyl-CoA + GDP + phosphate. Its pathway is carbohydrate metabolism; tricarboxylic acid cycle; succinate from succinyl-CoA (ligase route): step 1/1. Functionally, succinyl-CoA synthetase functions in the citric acid cycle (TCA), coupling the hydrolysis of succinyl-CoA to the synthesis of either ATP or GTP and thus represents the only step of substrate-level phosphorylation in the TCA. The beta subunit provides nucleotide specificity of the enzyme and binds the substrate succinate, while the binding sites for coenzyme A and phosphate are found in the alpha subunit. This is Succinate--CoA ligase [ADP-forming] subunit beta from Desulfosudis oleivorans (strain DSM 6200 / JCM 39069 / Hxd3) (Desulfococcus oleovorans).